The sequence spans 127 residues: Small ribosomal subunit protein uS11 (127 aa).

This sequence belongs to the universal ribosomal protein uS11 family. As to quaternary structure, part of the 30S ribosomal subunit. Interacts with proteins S7 and S18. Binds to IF-3.

In terms of biological role, located on the platform of the 30S subunit, it bridges several disparate RNA helices of the 16S rRNA. Forms part of the Shine-Dalgarno cleft in the 70S ribosome. This is Small ribosomal subunit protein uS11 from Ehrlichia ruminantium (strain Gardel).